We begin with the raw amino-acid sequence, 362 residues long: Class I histocompatibility antigen, Gogo-B*0103 alpha chain (362 aa).

An N-terminal signal peptide occupies residues 1–24 (MRVTAPRTLLLLLSAALALTETWA). The tract at residues 25-114 (GSHSMRYFDT…ALRYYNQSEA (90 aa)) is alpha-1. At 25-308 (GSHSMRYFDT…EPSSQSTIPI (284 aa)) the chain is on the extracellular side. Asn-110 is a glycosylation site (N-linked (GlcNAc...) asparagine). The alpha-2 stretch occupies residues 115–206 (GSHTIQWMYG…ENGRETLQRA (92 aa)). Intrachain disulfides connect Cys-125–Cys-188 and Cys-227–Cys-283. An alpha-3 region spans residues 207 to 298 (DTPKTHVTHH…GLPKPLTLRW (92 aa)). Positions 209 to 295 (PKTHVTHHPI…QHEGLPKPLT (87 aa)) constitute an Ig-like C1-type domain. The connecting peptide stretch occupies residues 299–308 (EPSSQSTIPI). Residues 309–332 (VGIVAGLAVLAVVVIGAVVTAVIC) traverse the membrane as a helical segment. Over 333–362 (RRKSSGGKGGSYSQAASSDSAQGSDVSLTA) the chain is Cytoplasmic. The interval 335–362 (KSSGGKGGSYSQAASSDSAQGSDVSLTA) is disordered. The span at 343 to 362 (SYSQAASSDSAQGSDVSLTA) shows a compositional bias: low complexity.

This sequence belongs to the MHC class I family. In terms of assembly, heterodimer of an alpha chain and a beta chain (beta-2-microglobulin).

The protein resides in the membrane. Its function is as follows. Involved in the presentation of foreign antigens to the immune system. The protein is Class I histocompatibility antigen, Gogo-B*0103 alpha chain of Gorilla gorilla gorilla (Western lowland gorilla).